Reading from the N-terminus, the 134-residue chain is Profilin-2 (134 aa).

A disulfide bridge links Cys13 with Cys118. The Involved in PIP2 interaction motif lies at Ala84–Thr100. A Phosphothreonine modification is found at Thr114.

It belongs to the profilin family. As to quaternary structure, occurs in many kinds of cells as a complex with monomeric actin in a 1:1 ratio. In terms of processing, phosphorylated by MAP kinases.

The protein localises to the cytoplasm. It localises to the cytoskeleton. In terms of biological role, binds to actin and affects the structure of the cytoskeleton. At high concentrations, profilin prevents the polymerization of actin, whereas it enhances it at low concentrations. This is Profilin-2 from Olea europaea (Common olive).